A 596-amino-acid chain; its full sequence is Ulvan-active sulfatase (596 aa).

The first 27 residues, 1 to 27, serve as a signal peptide directing secretion; that stretch reads MLFLRFKFFNNRLLFVSVLCFVICVSC. The Ca(2+) site is built by Glu58, Asp59, Cys97, Asp306, and His307. The active-site Nucleophile is Cys97. Residue Cys97 is modified to 3-oxoalanine (Cys).

The protein belongs to the sulfatase family. The cofactor is Ca(2+). In terms of processing, the conversion to 3-oxoalanine (also known as C-formylglycine, FGly), of a serine or cysteine residue in prokaryotes and of a cysteine residue in eukaryotes, is critical for catalytic activity.

Its subcellular location is the periplasm. Sulfatase involved in ulvan degradation. Ulvan is the main polysaccharide component of the Ulvales (green seaweed) cell wall. It is composed of disaccharide building blocks comprising 3-sulfated rhamnose (Rha3S) linked to D-glucuronic acid (GlcA), L-iduronic acid (IduA), or D-xylose (Xyl). The sulfatase desulfates Xyl2S-Rha3S, product of the degradation of ulvan by endo-acting alpha-1,4-L-rhamnosidase, to Xyl-Rha3S. In Formosa agariphila (strain DSM 15362 / KCTC 12365 / LMG 23005 / KMM 3901 / M-2Alg 35-1), this protein is Ulvan-active sulfatase.